A 269-amino-acid polypeptide reads, in one-letter code: UPF0524 protein C3orf70 homolog A (269 aa).

Disordered stretches follow at residues 139-203 (VQRP…DSGI) and 215-249 (DEDS…QDEC). The span at 141–150 (RPPPPTPNPT) shows a compositional bias: pro residues. Low complexity predominate over residues 151 to 164 (HQPQTAAPQPVPQR). A compositionally biased stretch (basic and acidic residues) spans 179–191 (QAKEKISAPKMDH). Acidic residues predominate over residues 215 to 233 (DEDSCVDDDDEEEEDDELS).

Belongs to the UPF0524 family.

Plays a role in neuronal and neurobehavioral development. Required for normal expression of neuronal markers elavl3 and eno2 and neurobehaviors related to circadian rhythm and changes in light-dark conditions. This chain is UPF0524 protein C3orf70 homolog A, found in Danio rerio (Zebrafish).